Here is a 248-residue protein sequence, read N- to C-terminus: Ribonuclease PH (248 aa).

Residues Arg-86 and 124-126 (GTR) each bind phosphate.

The protein belongs to the RNase PH family. Homohexameric ring arranged as a trimer of dimers.

It carries out the reaction tRNA(n+1) + phosphate = tRNA(n) + a ribonucleoside 5'-diphosphate. Functionally, phosphorolytic 3'-5' exoribonuclease that plays an important role in tRNA 3'-end maturation. Removes nucleotide residues following the 3'-CCA terminus of tRNAs; can also add nucleotides to the ends of RNA molecules by using nucleoside diphosphates as substrates, but this may not be physiologically important. Probably plays a role in initiation of 16S rRNA degradation (leading to ribosome degradation) during starvation. The polypeptide is Ribonuclease PH (Clostridium perfringens (strain 13 / Type A)).